The chain runs to 177 residues: Plasmid transfer protein TraF (177 aa).

Residues 1-30 (MSRFQRLTKYVAIGGGAALLLAGAAYLAGA) form the signal peptide.

It belongs to the peptidase S26C family.

The protein localises to the periplasm. Its function is as follows. Required for donor-specific phage sensitivity. May be involved in pilus assembly. The sequence is that of Plasmid transfer protein TraF (traF) from Escherichia coli.